A 918-amino-acid polypeptide reads, in one-letter code: von Willebrand factor A domain-containing protein DDB_G0292016 (918 aa).

The VIT domain maps to 44–172; that stretch reads KRCGLYSLKN…NVKVRVVISS (129 aa). Positions 299–467 constitute a VWFA domain; that stretch reads EFIFLIDCSG…NMEKQVMKLL (169 aa). Residues 625 to 814 form a disordered region; that stretch reads VDIMNQSPPI…PSAPSQQKSV (190 aa). Low complexity predominate over residues 650–690; the sequence is ASGALSSSILSRKRSSSPSTATKRSSSSSFSSSYLSLSSSS. Residues 716 to 746 show a composition bias toward acidic residues; the sequence is YESDGGDQSSEQDEEEEDDCDDFHEDLDEDL. A compositionally biased stretch (basic and acidic residues) spans 752-774; that stretch reads DVDKKECEKECKKKDSSKVDLKV. The segment covering 777–814 has biased composition (low complexity); sequence SKVPLPSRSPSVSKPTTTSLLSPSPKSAPSAPSQQKSV.

In Dictyostelium discoideum (Social amoeba), this protein is von Willebrand factor A domain-containing protein DDB_G0292016.